Reading from the N-terminus, the 297-residue chain is Ribosomal RNA small subunit methyltransferase H (297 aa).

S-adenosyl-L-methionine contacts are provided by residues 37 to 39 (GGH), Asp56, Phe87, Asp102, and His109.

Belongs to the methyltransferase superfamily. RsmH family.

Its subcellular location is the cytoplasm. The enzyme catalyses cytidine(1402) in 16S rRNA + S-adenosyl-L-methionine = N(4)-methylcytidine(1402) in 16S rRNA + S-adenosyl-L-homocysteine + H(+). Specifically methylates the N4 position of cytidine in position 1402 (C1402) of 16S rRNA. The sequence is that of Ribosomal RNA small subunit methyltransferase H from Borrelia turicatae (strain 91E135).